The sequence spans 219 residues: Histone H1.4 (219 aa).

Residues 1–15 (MSETAPAAPAAPAPA) show a composition bias toward low complexity. The tract at residues 1–41 (MSETAPAAPAAPAPAEKTPIKKKARKAAGGAKRKASGPPVS) is disordered. N-acetylserine is present on Ser2. Ser2 is modified (phosphoserine). Lys17 bears the N6-acetyllysine mark. Thr18 carries the post-translational modification Phosphothreonine. Over residues 20 to 35 (IKKKARKAAGGAKRKA) the composition is skewed to basic residues. Lys26 is subject to N6-acetyllysine; alternate. Residue Lys26 is modified to N6-methyllysine; alternate. Lys34 bears the N6-(beta-hydroxybutyryl)lysine; alternate mark. Position 34 is an N6-succinyllysine; alternate (Lys34). Phosphoserine is present on Ser36. Residues 36 to 109 (SGPPVSELIT…GASGSFKLNK (74 aa)) enclose the H15 domain. Lys52 carries the N6-(beta-hydroxybutyryl)lysine modification. Arg54 is modified (citrulline). 4 positions are modified to N6-(beta-hydroxybutyryl)lysine: Lys64, Lys85, Lys90, and Lys106. The tract at residues 92-219 (TLVQTKGTGA…KPKKTAAKKK (128 aa)) is disordered. The segment covering 119–140 (KAKKAGAAKAKKPAGAAKKPKK) has biased composition (basic residues). The residue at position 146 (Thr146) is a Phosphothreonine. Basic residues-rich tracts occupy residues 149–160 (KSTKKTPKKAKK) and 168–185 (KKAK…KKAP). Ser150 carries the ADP-ribosylserine modification. Ser187 bears the Phosphoserine mark. Over residues 192–219 (RAVKPKAAKPKTSKPKAAKPKKTAAKKK) the composition is skewed to basic residues.

The protein belongs to the histone H1/H5 family. H1 histones are progressively phosphorylated during the cell cycle, becoming maximally phosphorylated during late G2 phase and M phase, and being dephosphorylated sharply thereafter. In terms of processing, acetylated at Lys-26. Deacetylated at Lys-26 by SIRT1. Post-translationally, citrullination at Arg-54 (H1R54ci) by PADI4 takes place within the DNA-binding site of H1 and results in its displacement from chromatin and global chromatin decondensation, thereby promoting pluripotency and stem cell maintenance. ADP-ribosylated on Ser-150 in response to DNA damage.

It is found in the nucleus. The protein localises to the chromosome. In terms of biological role, histone H1 protein binds to linker DNA between nucleosomes forming the macromolecular structure known as the chromatin fiber. Histones H1 are necessary for the condensation of nucleosome chains into higher-order structured fibers. Also acts as a regulator of individual gene transcription through chromatin remodeling, nucleosome spacing and DNA methylation. The protein is Histone H1.4 of Rattus norvegicus (Rat).